A 422-amino-acid polypeptide reads, in one-letter code: Protein UmuC (422 aa).

The region spanning 2 to 188 is the UmuC domain; the sequence is FALCDVNAFY…LPVDDVWGIG (187 aa).

The protein belongs to the DNA polymerase type-Y family.

In terms of biological role, involved in UV protection and mutation. Poorly processive, error-prone DNA polymerase involved in translesion repair. Essential for induced (or SOS) mutagenesis. Able to replicate DNA across DNA lesions (thymine photodimers and abasic sites, translesion synthesis) in the presence of activated RecA; efficiency is maximal in the presence of the beta sliding-clamp and clamp-loading complex of DNA polymerase III plus single-stranded binding protein (SSB). RecA and to a lesser extent the beta clamp-complex may target Pol V to replication complexes stalled at DNA template lesions. This is Protein UmuC (umuC) from Escherichia coli (strain K12).